Here is a 217-residue protein sequence, read N- to C-terminus: Small ribosomal subunit protein uS3c (217 aa).

The region spanning 43 to 117 is the KH type-2 domain; sequence IKNYVQKNKR…KLNIAITRIA (75 aa).

The protein belongs to the universal ribosomal protein uS3 family. As to quaternary structure, part of the 30S ribosomal subunit.

The protein resides in the plastid. It is found in the chloroplast. This chain is Small ribosomal subunit protein uS3c (rps3), found in Platanus occidentalis (Sycamore).